A 262-amino-acid polypeptide reads, in one-letter code: MAWKSSVIMQMGRFLLLVILFLPREMTSSVLTVNGKTENYILDTTPGSQASLICAVQNHTREEELLWYREEGRVDLKSGNKINSSSVCVSSISENDNGISFTCRLGRDQSVSVSVVLNVTFPPLLSGNDFQTVEEGSNVKLVCNVKANPQAQMMWYKNSSLLDLEKSRHQIQQTSESFQLSITKVEKPDNGTYSCIAKSSLKTESLDFHLIVKDKTVGVPIEPIIAACVVIFLTLCFGLIARRKKIMKLCMKDKDPHSETAL.

The signal sequence occupies residues 1-29 (MAWKSSVIMQMGRFLLLVILFLPREMTSS). One can recognise an Ig-like C2-type 1 domain in the interval 30–114 (VLTVNGKTEN…LGRDQSVSVS (85 aa)). Over 30 to 220 (VLTVNGKTEN…IVKDKTVGVP (191 aa)) the chain is Extracellular. Cys-54 and Cys-103 form a disulfide bridge. N-linked (GlcNAc...) asparagine glycosylation is found at Asn-58, Asn-83, Asn-118, Asn-158, and Asn-190. Residues 122–207 (PPLLSGNDFQ…KSSLKTESLD (86 aa)) form the Ig-like C2-type 2 domain. An intrachain disulfide couples Cys-143 to Cys-195. A helical membrane pass occupies residues 221-241 (IEPIIAACVVIFLTLCFGLIA). Over 242–262 (RRKKIMKLCMKDKDPHSETAL) the chain is Cytoplasmic.

As to quaternary structure, homodimer. Post-translationally, N-glycosylated.

It is found in the cell membrane. The protein localises to the cytoplasm. Its function is as follows. May control cell-cell adhesion, cell migration and proliferation, cell morphology, and protects renal epithelial cells from oxidative cell injury to promote cell survival. This chain is Transmembrane and immunoglobulin domain-containing protein 1, found in Homo sapiens (Human).